Consider the following 86-residue polypeptide: MKLLFAIVALLALAFLCADISAVKTSWPELVGETLEEAKAQILEDRPDAVIKVQPEHSPVTYDYRPSRVIIFVNKDGNVAETPAAG.

The signal sequence occupies residues 1–22 (MKLLFAIVALLALAFLCADISA).

It belongs to the protease inhibitor I13 (potato type I serine protease inhibitor) family. As to quaternary structure, monomer. In terms of tissue distribution, expressed in the body wall, coelomocytes and at a lower level in intestine.

The protein resides in the secreted. Functionally, inhibits L.terrestris digestive chymotrypsin LT_CH 1 and bovine alpha-chymotrypsin. The polypeptide is Chymotrypsin inhibitor (Lumbricus terrestris (Common earthworm)).